A 706-amino-acid chain; its full sequence is Elongation factor G (706 aa).

The tr-type G domain occupies 12–288 (EKTRNIGIMA…GVTNYLPSPN (277 aa)). Residues 21–28 (AHIDAGKT), 85–89 (DTPGH), and 139–142 (NKMD) each bind GTP. The tract at residues 288–309 (NDVPAITGHHPQDKEEDITRHP) is disordered. Positions 297-309 (HPQDKEEDITRHP) are enriched in basic and acidic residues.

This sequence belongs to the TRAFAC class translation factor GTPase superfamily. Classic translation factor GTPase family. EF-G/EF-2 subfamily.

The protein localises to the cytoplasm. Functionally, catalyzes the GTP-dependent ribosomal translocation step during translation elongation. During this step, the ribosome changes from the pre-translocational (PRE) to the post-translocational (POST) state as the newly formed A-site-bound peptidyl-tRNA and P-site-bound deacylated tRNA move to the P and E sites, respectively. Catalyzes the coordinated movement of the two tRNA molecules, the mRNA and conformational changes in the ribosome. This Salinibacter ruber (strain DSM 13855 / M31) protein is Elongation factor G.